The chain runs to 243 residues: Probable septum site-determining protein MinC (243 aa).

This sequence belongs to the MinC family. In terms of assembly, interacts with MinD and FtsZ.

Its function is as follows. Cell division inhibitor that blocks the formation of polar Z ring septums. Rapidly oscillates between the poles of the cell to destabilize FtsZ filaments that have formed before they mature into polar Z rings. Prevents FtsZ polymerization. The protein is Probable septum site-determining protein MinC of Agathobacter rectalis (strain ATCC 33656 / DSM 3377 / JCM 17463 / KCTC 5835 / VPI 0990) (Eubacterium rectale).